Reading from the N-terminus, the 150-residue chain is Large ribosomal subunit protein bL9 (150 aa).

Belongs to the bacterial ribosomal protein bL9 family.

Binds to the 23S rRNA. In Neisseria meningitidis serogroup A / serotype 4A (strain DSM 15465 / Z2491), this protein is Large ribosomal subunit protein bL9.